Consider the following 101-residue polypeptide: Small ribosomal subunit protein uS10 (101 aa).

This sequence belongs to the universal ribosomal protein uS10 family. As to quaternary structure, part of the 30S ribosomal subunit.

Functionally, involved in the binding of tRNA to the ribosomes. This is Small ribosomal subunit protein uS10 from Rhodococcus erythropolis (strain PR4 / NBRC 100887).